Consider the following 1337-residue polypeptide: Aldehyde oxidase 4 (1337 aa).

The 2Fe-2S ferredoxin-type domain maps to 4–91; it reads DDLVFAVNGE…GCSITTSDGL (88 aa). The [2Fe-2S] cluster site is built by Cys43, Cys48, Cys51, Cys73, Cys113, Cys116, Cys155, and Cys157. The FAD-binding PCMH-type domain occupies 225–409; that stretch reads LDQTRYHWST…LKVHIPRWIA (185 aa). FAD is bound by residues 259 to 266, 342 to 346, Asp358, and Leu399; these read LVVGNTGT and SIGGN. Positions 771, 802, and 915 each coordinate Mo-molybdopterin. Glu1265 functions as the Proton acceptor in the catalytic mechanism.

It belongs to the xanthine dehydrogenase family. Aldehyde oxidases (AO) are homodimers and heterodimers of AO subunits. [2Fe-2S] cluster serves as cofactor. Requires FAD as cofactor. The cofactor is Mo-molybdopterin. In terms of tissue distribution, transcripts expressed at high levels in developing siliques and at low levels in dry seeds.

Its subcellular location is the cytoplasm. It carries out the reaction indole-3-acetaldehyde + O2 + H2O = (indol-3-yl)acetate + H2O2 + H(+). It catalyses the reaction an aldehyde + O2 + H2O = a carboxylate + H2O2 + H(+). The enzyme catalyses benzaldehyde + O2 + H2O = benzoate + H2O2 + H(+). The catalysed reaction is hexanal + O2 + H2O = hexanoate + H2O2 + H(+). It carries out the reaction 1-naphthaldehyde + O2 + H2O = 1-naphthoate + H2O2 + H(+). It catalyses the reaction vanillin + O2 + H2O = vanillate + H2O2 + H(+). The enzyme catalyses malonaldehyde + O2 + H2O = 3-oxopropanoate + H2O2 + H(+). The catalysed reaction is citral + O2 + H2O = 3,7-dimethylocta-2,6-dienoate + H2O2 + H(+). It carries out the reaction acrolein + O2 + H2O = acrylate + H2O2 + H(+). It catalyses the reaction (E)-4-hydroxynon-2-enal + O2 + H2O = (E)-4-hydroxynon-2-enoate + H2O2 + H(+). The enzyme catalyses (E)-cinnamaldehyde + O2 + H2O = (E)-cinnamate + H2O2 + H(+). The catalysed reaction is indole-3-carbaldehyde + O2 + H2O = indole-3-carboxylate + H2O2 + H(+). It carries out the reaction propanal + O2 + H2O = propanoate + H2O2 + H(+). It catalyses the reaction dodecanal + O2 + H2O = dodecanoate + H2O2 + H(+). The enzyme catalyses salicylaldehyde + O2 + H2O = salicylate + H2O2 + H(+). Its activity is regulated as follows. Inhibited by Cu(2+). Aldehyde oxidase with a broad substrate specificity. Involved in the accumulation of benzoic acid (BA) in siliques. Delays and protects siliques from senescence by catalyzing aldehyde detoxification in siliques. Catalyzes the oxidation of an array of aromatic and aliphatic aldehydes, including vanillin and the reactive carbonyl species (RCS) acrolein, 4-hydroxyl-2-nonenal (HNE), and malondialdehyde (MDA). The chain is Aldehyde oxidase 4 from Arabidopsis thaliana (Mouse-ear cress).